The following is a 2514-amino-acid chain: Polyprotein P1234 (2514 aa).

Residues 28 to 259 (EPKQVTPNDH…ESRKLLQSWH (232 aa)) enclose the Alphavirus-like MT domain. Residues 244–263 (GSTLYPESRKLLQSWHLPSV) are nsP1 membrane-binding. S-palmitoyl cysteine; by host attachment occurs at residues C417 and C419. In terms of domain architecture, (+)RNA virus helicase ATP-binding spans 690 to 842 (DLTSPPYHEF…HNICTQVYHK (153 aa)). A ribonucleoside 5'-triphosphate is bound at residue 721–728 (GVPGSGKS). In terms of domain architecture, (+)RNA virus helicase C-terminal spans 843-991 (SISRRCTLPV…IKEWEAEHAS (149 aa)). The 324-residue stretch at 1004–1327 (DTFQNKANVC…NQLNAVYAGL (324 aa)) folds into the Peptidase C9 domain. The nucleolus localization signal stretch occupies residues 1005–1024 (TFQNKANVCWAKCLVPILDT). The active-site For cysteine protease nsP2 activity is C1013. The short motif at 1058 to 1067 (TRIYGVDLDS) is the Nuclear export signal element. H1083 serves as the catalytic For cysteine protease nsP2 activity. A Nuclear localization signal motif is present at residues 1182–1186 (PTKRV). The Macro domain maps to 1334–1493 (APSYRVKRMD…KITEAISLRS (160 aa)). ADP-D-ribose is bound by residues D1343, N1357, G1365, G1445, V1446, and Y1447. Positions 1595, 1597, 1620, and 1638 each coordinate Zn(2+). 2 consecutive short sequence motifs (FGDF; binding to host G3BP1) follow at residues 1852–1855 (FGDF) and 1870–1873 (FGDF). A RdRp catalytic domain is found at 2268–2383 (DAVLETDIAS…HGVVSDALMA (116 aa)).

Interacts with non-structural protein 3. Interacts with RNA-directed RNA polymerase nsP4. Interacts with protease nsP2. interacts with itself. As to quaternary structure, interacts with mRNA-capping enzyme nsP1. Interacts with host DDX1. Interacts with host DDX3. Interacts (via C-terminus) with host G3BP1; this interaction inhibits the formation of host stress granules on viral mRNAs and the nsp3-G3BP1 complexes bind viral RNAs and probably orchestrate the assembly of viral replication complexes. Interacts (via C-terminus) with host G3BP2; this interaction inhibits the formation of host stress granules on viral mRNAs and the nsp3-G3BP2 complexes bind viral RNAs and probably orchestrate the assembly of viral replication complexes. In terms of assembly, interacts with mRNA-capping enzyme nsP1. Interacts with protease nsP2. interacts with itself. Interacts with RNA-directed RNA polymerase nsP4. Interacts with mRNA-capping enzyme nsP1. Interacts with KPNA1/karyopherin-alpha1; this interaction probably allows the active transport of protease nsP2 into the host nucleus. Mg(2+) is required as a cofactor. The cofactor is Mn(2+). In terms of processing, specific enzymatic cleavages in vivo yield mature proteins. The processing of the polyprotein is temporally regulated. In early stages (1.7 hpi), P1234 is first cleaved in trans through its nsP2 protease activity, releasing P123 and nsP4, which associate to form the early replication complex. At the same time, P1234 is also cut at the nsP1/nsP2 site early in infection but with lower efficiency. After replication of the viral minus-strand RNAs (4 hpi), the polyproteins are cut at the nsP1/nsP2 and nsP2/nsP3 sites very efficiently, preventing accumulation of P123 and P1234 and allowing the formation of the late replication complex. NsP3/nsP4 site is not cleaved anymore and P34 is produced rather than nsP4. Specific enzymatic cleavages in vivo yield mature proteins. The processing of the polyprotein is temporally regulated. In early stages (1.7 hpi), P123 is cleaved at the nsP1/nsP2 site with low efficiency. After replication of the viral minus-strand RNAs (4 hpi), the polyproteins are cut at the nsP1/nsP2 and nsP2/nsP3 sites very efficiently, preventing accumulation of P123 and allowing the formation of the late replication complex. Post-translationally, palmitoylated by host palmitoyltransferases ZDHHC2 and ZDHHC19. In terms of processing, phosphorylated by host on serines and threonines. Ubiquitinated; targets the protein for rapid degradation via the ubiquitin system. Nsp4 is present in extremely low quantities due to low frequency of translation through the amber stop-codon and the degradation by the ubiquitin pathway.

It localises to the host cytoplasmic vesicle membrane. The protein localises to the host cell membrane. It is found in the host cell projection. The protein resides in the host filopodium. Its subcellular location is the host nucleus. It localises to the host cytoplasm. It catalyses the reaction GTP + S-adenosyl-L-methionine = N(7)-methyl-GTP + S-adenosyl-L-homocysteine. It carries out the reaction N(7)-methyl-GTP + L-histidyl-[protein] = N(tele)-(N(7)-methylguanosine 5'-phospho)-L-histidyl-[protein] + diphosphate. The enzyme catalyses N(tele)-(N(7)-methylguanosine 5'-phospho)-L-histidyl-[protein] + a 5'-end diphospho-(purine-ribonucleoside) in mRNA + H(+) = a 5'-end (N(7)-methyl 5'-triphosphoguanosine)-(purine-ribonucleoside) in mRNA + L-histidyl-[protein]. The catalysed reaction is a 5'-end triphospho-ribonucleoside in mRNA + H2O = a 5'-end diphospho-ribonucleoside in mRNA + phosphate + H(+). It catalyses the reaction a ribonucleoside 5'-triphosphate + H2O = a ribonucleoside 5'-diphosphate + phosphate + H(+). It carries out the reaction ATP + H2O = ADP + phosphate + H(+). The enzyme catalyses RNA(n) + a ribonucleoside 5'-triphosphate = RNA(n+1) + diphosphate. The catalysed reaction is 4-O-(ADP-D-ribosyl)-L-aspartyl-[protein] + H2O = L-aspartyl-[protein] + ADP-D-ribose + H(+). It catalyses the reaction 5-O-(ADP-D-ribosyl)-L-glutamyl-[protein] + H2O = L-glutamyl-[protein] + ADP-D-ribose + H(+). It carries out the reaction RNA(n) + ATP = RNA(n)-3'-adenine ribonucleotide + diphosphate. The enzyme catalyses ADP-alpha-D-ribose 1''-phosphate + H2O = ADP-D-ribose + phosphate. Inactive precursor of the viral replicase, which is activated by cleavages carried out by the viral protease nsP2. In terms of biological role, the early replication complex formed by the polyprotein P123 and nsP4 synthesizes minus-strand RNAs. As soon P123 is cleaved into mature proteins, the plus-strand RNAs synthesis begins. Its function is as follows. Cytoplasmic capping enzyme that catalyzes two virus-specific reactions: methyltransferase and nsP1 guanylyltransferase. mRNA-capping is necessary since all viral RNAs are synthesized in the cytoplasm, and host capping enzymes are restricted to the nucleus. The enzymatic reaction involves a covalent link between 7-methyl-GMP and nsP1, whereas eukaryotic capping enzymes form a covalent complex only with GMP. nsP1 capping consists in the following reactions: GTP is first methylated into 7-methyl-GMP and then is covalently linked to nsP1 to form the m7GMp-nsP1 complex from which 7-methyl-GMP complex is transferred to the mRNA to create the cap structure. NsP1 is also needed for the initiation of the minus-strand RNAs synthesis. Probably serves as a membrane anchor for the replication complex composed of nsP1-nsP4. Palmitoylated nsP1 is remodeling host cell cytoskeleton, and induces filopodium-like structure formation at the surface of the host cell. Functionally, multifunctional protein whose N-terminus is part of the RNA polymerase complex and displays NTPase, RNA triphosphatase and helicase activities. NTPase and RNA triphosphatase are involved in viral RNA capping and helicase keeps a check on the dsRNA replication intermediates. The C-terminus harbors a protease that specifically cleaves the polyproteins and releases the mature proteins. Required for the shutoff of minus-strand RNAs synthesis. Specifically inhibits the host IFN response by promoting the nuclear export of host STAT1. Also inhibits host transcription by inducing the rapid proteasome-dependent degradation of POLR2A, a catalytic subunit of the RNAPII complex. The resulting inhibition of cellular protein synthesis serves to ensure maximal viral gene expression and to evade host immune response. Seems to be essential for minus-strand RNAs and subgenomic 26S mRNAs synthesis. Displays mono-ADP-ribosylhydrolase activity. ADP-ribosylation is a post-translational modification that controls various processes of the host cell and the virus probably needs to revert it for optimal viral replication. Binds proteins of G3BP family and sequesters them into the viral RNA replication complexes thereby inhibiting the formation of host stress granules on viral mRNAs. The nsp3-G3BP complexes bind viral RNAs and probably orchestrate the assembly of viral replication complexes, thanks to the ability of G3BP family members to self-assemble and bind DNA. In terms of biological role, RNA dependent RNA polymerase. Replicates genomic and antigenomic RNA by recognizing replications specific signals. The early replication complex formed by the polyprotein P123 and nsP4 synthesizes minus-strand RNAs. The late replication complex composed of fully processed nsP1-nsP4 is responsible for the production of genomic and subgenomic plus-strand RNAs. This is Polyprotein P1234 from O'nyong-nyong virus (strain Gulu) (ONNV).